The following is a 485-amino-acid chain: Argininosuccinate lyase (485 aa).

It belongs to the lyase 1 family. Argininosuccinate lyase subfamily.

The protein resides in the cytoplasm. The catalysed reaction is 2-(N(omega)-L-arginino)succinate = fumarate + L-arginine. The protein operates within amino-acid biosynthesis; L-arginine biosynthesis; L-arginine from L-ornithine and carbamoyl phosphate: step 3/3. This chain is Argininosuccinate lyase, found in Halobacterium salinarum (strain ATCC 29341 / DSM 671 / R1).